A 1238-amino-acid polypeptide reads, in one-letter code: DNA-directed RNA polymerase subunit beta (1238 aa).

Residues 1186-1238 (IEGREDTPPEEVYEEGYEEGFEEESEELPEDIDFEPDSFDIENDDLDLEDFDI) are disordered. A compositionally biased stretch (acidic residues) spans 1193–1238 (PPEEVYEEGYEEGFEEESEELPEDIDFEPDSFDIENDDLDLEDFDI).

It belongs to the RNA polymerase beta chain family. The RNAP catalytic core consists of 2 alpha, 1 beta, 1 beta' and 1 omega subunit. When a sigma factor is associated with the core the holoenzyme is formed, which can initiate transcription.

The enzyme catalyses RNA(n) + a ribonucleoside 5'-triphosphate = RNA(n+1) + diphosphate. DNA-dependent RNA polymerase catalyzes the transcription of DNA into RNA using the four ribonucleoside triphosphates as substrates. This Thermoanaerobacter sp. (strain X514) protein is DNA-directed RNA polymerase subunit beta.